Reading from the N-terminus, the 645-residue chain is Meiosis induction protein kinase IME2/SME1 (645 aa).

The segment at 1 to 24 (MVEKRSRQSSSSGSEFSVPPDVDN) is disordered. Over residues 8–17 (QSSSSGSEFS) the composition is skewed to low complexity. The 349-residue stretch at 38–386 (YQLIEKLGAG…AQELCEMPFF (349 aa)) folds into the Protein kinase domain. ATP contacts are provided by residues 44–52 (LGAGSFGCV) and K67. Residue D193 is the Proton acceptor of the active site.

This sequence belongs to the protein kinase superfamily. Ser/Thr protein kinase family.

The catalysed reaction is L-seryl-[protein] + ATP = O-phospho-L-seryl-[protein] + ADP + H(+). It carries out the reaction L-threonyl-[protein] + ATP = O-phospho-L-threonyl-[protein] + ADP + H(+). Its function is as follows. Protein kinase which is essential for the initiation of meiosis and sporulation. This is Meiosis induction protein kinase IME2/SME1 (IME2) from Saccharomyces cerevisiae (strain ATCC 204508 / S288c) (Baker's yeast).